A 338-amino-acid chain; its full sequence is GDSL esterase/lipase At5g63170 (338 aa).

Positions Met1–Ala23 are cleaved as a signal peptide. Catalysis depends on Ser35, which acts as the Nucleophile. Residues Asp313 and His316 contribute to the active site.

Belongs to the 'GDSL' lipolytic enzyme family.

The protein localises to the secreted. The sequence is that of GDSL esterase/lipase At5g63170 from Arabidopsis thaliana (Mouse-ear cress).